Reading from the N-terminus, the 482-residue chain is Type II methyltransferase M.AvaI (482 aa).

This sequence belongs to the N(4)/N(6)-methyltransferase family. N(4) subfamily.

The enzyme catalyses a 2'-deoxycytidine in DNA + S-adenosyl-L-methionine = an N(4)-methyl-2'-deoxycytidine in DNA + S-adenosyl-L-homocysteine + H(+). An alpha subtype methylase that recognizes the double-stranded sequence 5'-CYCGRG-3', methylates C-1 on both strands, and protects the DNA from cleavage by the AvaI endonuclease. The chain is Type II methyltransferase M.AvaI from Anabaena variabilis.